Here is a 578-residue protein sequence, read N- to C-terminus: Acyl-CoA ligase AKT1 (578 aa).

ATP-binding positions include 210–218 (SSGTSGAQK), 350–355 (QCYGAT), D438, R457, and K554. The SBD1 stretch occupies residues 281–350 (DVEDLLSIVE…RHHPTWKTKQ (70 aa)). The SBD2 stretch occupies residues 351–413 (CYGATEAGTA…VSSPSLAIGY (63 aa)). A Peroxisomal targeting signal type 1 motif is present at residues 576–578 (SKI).

It is found in the peroxisome. The protein operates within mycotoxin biosynthesis. Acyl-CoA ligase; part of the gene clusters that mediate the biosynthesis of the host-selective toxins (HSTs) AK-toxins responsible for Japanese pear black spot disease by the Japanese pear pathotype. AK-toxins are esters of 9,10-epoxy 8-hydroxy 9-methyldecatrienoic acid (EDA). On cellular level, AK-toxins affect plasma membrane of susceptible cells and cause a sudden increase in loss of K(+) after a few minutes of toxin treatment. The acyl-CoA ligase AKT1, the hydrolase AKT2 and enoyl-CoA hydratase AKT3 are all involved in the biosynthesis of the AK-, AF- and ACT-toxin common 9,10-epoxy-8-hydroxy-9-methyl-decatrienoic acid (EDA) structural moiety. Part of the EDA biosynthesis occurs in the peroxisome since these 3 enzymes are localized in peroxisomes. The exact roles of the 3 enzymes, as well as of additional AK-toxin clusters enzymes, including AKT4, AKT6 and AKTS1, have still to be elucidated. The Cytochrome P450 monooxygenase AKT7 on the other side functions to limit production of EDA and AK-toxin, probably via the catalysis of a side reaction of EDA or its precursor. This chain is Acyl-CoA ligase AKT1, found in Alternaria alternata (Alternaria rot fungus).